Here is a 130-residue protein sequence, read N- to C-terminus: Small ribosomal subunit protein uS9 (130 aa).

It belongs to the universal ribosomal protein uS9 family.

This chain is Small ribosomal subunit protein uS9, found in Burkholderia thailandensis (strain ATCC 700388 / DSM 13276 / CCUG 48851 / CIP 106301 / E264).